A 540-amino-acid polypeptide reads, in one-letter code: Zona pellucida sperm-binding protein 4 (540 aa).

The signal sequence occupies residues 1-24 (MAPGSTMWLLGYIFLCFPVSFALI). At 25–515 (KQPKPETPTD…SGVPVHPGAL (491 aa)) the chain is on the extracellular side. 2 N-linked (GlcNAc...) asparagine glycosylation sites follow: asparagine 76 and asparagine 97. A P-type domain is found at 145–187 (GLCDSVPVQDRLPCATAPISQEDCEELGCCHSSEEVNACYYGN). One can recognise a ZP domain in the interval 192–470 (HCTQEGHFSI…VTCPIDSRRR (279 aa)). N-linked (GlcNAc...) asparagine glycans are attached at residues asparagine 206 and asparagine 223. O-linked (GalNAc...) serine glycosylation is present at serine 296. A glycan (O-linked (GalNAc...) threonine) is linked at threonine 306. Cysteine 371 and cysteine 446 are disulfide-bonded. A propeptide spans 467-540 (SRRRNSDINF…VSYVAIRTRR (74 aa)) (removed in mature form). 2 N-linked (GlcNAc...) asparagine glycosylation sites follow: asparagine 478 and asparagine 482. Residues 516–536 (WVAGLSGIFIIGALLVSYVAI) traverse the membrane as a helical segment. Over 537–540 (RTRR) the chain is Cytoplasmic.

Belongs to the ZP domain family. ZPB subfamily. Proteolytically cleaved before the transmembrane segment to yield the secreted ectodomain incorporated in the zona pellucida. Expressed in oocytes (at protein level).

It localises to the zona pellucida. The protein localises to the cell membrane. In terms of biological role, component of the zona pellucida, an extracellular matrix surrounding oocytes which mediates sperm binding, induction of the acrosome reaction and prevents post-fertilization polyspermy. The zona pellucida is composed of 3 to 4 glycoproteins, ZP1, ZP2, ZP3, and ZP4. ZP4 may act as a sperm receptor. This Oryctolagus cuniculus (Rabbit) protein is Zona pellucida sperm-binding protein 4 (ZP4).